The following is a 448-amino-acid chain: MSLIVSDRFRIVVGLGKSGMSLVRFLANRGVSFAVADTRENPPELATLRRDYPQVEVRCGELDVDFLCRADELYVSPGLALATPALQQAHARGVKLSGDIELFARYAKAPVIAITGSNAKSTVTTLVGEMAVAAGKRVAVGGNLGTPALDLLSDDVELYVMELSSFQLETTDQLNAEVATVLNISEDHMDRYSGLPAYHLAKHRIFRGARQVVVNRQDALSRPLIGEGLPCWTFGLNKPDFHGFGLLEENGEKYLAFQFENLMPVRELKVRGAHNQANALAALALGHAVGLPFDAMLASLREFTGLEHRCQWLREHDGVHYYNDSKATNVGAALAAIEGLGSDIDGKLVLIAGGDGKGADFSALRAPVAEHCRAAVLLGRDAELIAQALGDAVTLVRVDTVQAAVEQSARLAQRGDAVLLSPACASLDMFKNYEERGRVFAQAVECLS.

116 to 122 lines the ATP pocket; it reads GSNAKST.

This sequence belongs to the MurCDEF family.

Its subcellular location is the cytoplasm. It catalyses the reaction UDP-N-acetyl-alpha-D-muramoyl-L-alanine + D-glutamate + ATP = UDP-N-acetyl-alpha-D-muramoyl-L-alanyl-D-glutamate + ADP + phosphate + H(+). It participates in cell wall biogenesis; peptidoglycan biosynthesis. Cell wall formation. Catalyzes the addition of glutamate to the nucleotide precursor UDP-N-acetylmuramoyl-L-alanine (UMA). In Pseudomonas savastanoi pv. phaseolicola (strain 1448A / Race 6) (Pseudomonas syringae pv. phaseolicola (strain 1448A / Race 6)), this protein is UDP-N-acetylmuramoylalanine--D-glutamate ligase.